The primary structure comprises 209 residues: Ubiquitin-conjugating enzyme E2 S (209 aa).

The 147-residue stretch at 14 to 160 (QTIRQVMREL…ARMMTEIHAQ (147 aa)) folds into the UBC core domain. C98 acts as the Glycyl thioester intermediate in catalysis. Positions 164 to 209 (CGVGASGDAKDDDGPSTKKHAGLDKKLQDKKKEKLLKEKKRMLKRL) are disordered. Residues 171–199 (DAKDDDGPSTKKHAGLDKKLQDKKKEKLL) show a composition bias toward basic and acidic residues. The segment covering 200-209 (KEKKRMLKRL) has biased composition (basic residues).

This sequence belongs to the ubiquitin-conjugating enzyme family.

The enzyme catalyses S-ubiquitinyl-[E1 ubiquitin-activating enzyme]-L-cysteine + [E2 ubiquitin-conjugating enzyme]-L-cysteine = [E1 ubiquitin-activating enzyme]-L-cysteine + S-ubiquitinyl-[E2 ubiquitin-conjugating enzyme]-L-cysteine.. Its pathway is protein modification; protein ubiquitination. In terms of biological role, catalyzes the covalent attachment of ubiquitin to other proteins. Acts as an essential factor of the anaphase promoting complex/cyclosome (APC/C), a cell cycle-regulated ubiquitin ligase that controls progression through mitosis. Acts by specifically elongating polyubiquitin chains initiated by the E2 enzyme vih/UbcH10 on APC/C substrates, enhancing the degradation of APC/C substrates by the proteasome and promoting mitotic exit. The protein is Ubiquitin-conjugating enzyme E2 S of Drosophila yakuba (Fruit fly).